The following is an 81-amino-acid chain: Photosystem I iron-sulfur center (81 aa).

2 4Fe-4S ferredoxin-type domains span residues 2–31 and 39–68; these read SHAVKIYDTCIGCTQCVRACPLDVLEMVPW and IAASPRTEDCVGCKRCETACPTHFLSIRVY. The [4Fe-4S] cluster site is built by C11, C14, C17, C21, C48, C51, C54, and C58.

As to quaternary structure, the cyanobacterial PSI reaction center is composed of one copy each of PsaA,B,C,D,E,F,I,J,K,L,M and X, and forms trimeric complexes. The cofactor is [4Fe-4S] cluster.

It is found in the cellular thylakoid membrane. The catalysed reaction is reduced [plastocyanin] + hnu + oxidized [2Fe-2S]-[ferredoxin] = oxidized [plastocyanin] + reduced [2Fe-2S]-[ferredoxin]. Functionally, apoprotein for the two 4Fe-4S centers FA and FB of photosystem I (PSI); essential for photochemical activity. FB is the terminal electron acceptor of PSI, donating electrons to ferredoxin. The C-terminus interacts with PsaA/B/D and helps assemble the protein into the PSI complex. Required for binding of PsaD and PsaE to PSI. PSI is a plastocyanin/cytochrome c6-ferredoxin oxidoreductase, converting photonic excitation into a charge separation, which transfers an electron from the donor P700 chlorophyll pair to the spectroscopically characterized acceptors A0, A1, FX, FA and FB in turn. This chain is Photosystem I iron-sulfur center, found in Prochlorococcus marinus (strain MIT 9313).